The sequence spans 382 residues: Gap junction alpha-1 protein (382 aa).

The Cytoplasmic segment spans residues 2–23; sequence GDWSALGKLLDKVQAYSTAGGK. Position 5 is a phosphoserine (Ser5). A helical membrane pass occupies residues 24 to 44; it reads VWLSVLFIFRILLLGTAVESA. The Extracellular segment spans residues 45–76; it reads WGDEQSAFRCNTQQPGCENVCYDKSFPISHVR. Disulfide bonds link Cys54/Cys192 and Cys187/Cys198. The helical transmembrane segment at 77-97 threads the bilayer; the sequence is FWVLQIIFVSVPTLLYLAHVF. The Cytoplasmic portion of the chain corresponds to 98 to 155; the sequence is YVMRKEEKLNKKEEELKVAQTDGVNVEMHLKQIEIKKFKYGIEEHGKVKMRGGLLRTY. Lys144 participates in a covalent cross-link: Glycyl lysine isopeptide (Lys-Gly) (interchain with G-Cter in SUMO). The chain crosses the membrane as a helical span at residues 156–176; that stretch reads IISILFKSVFEVAFLLIQWYI. Residues 177-207 lie on the Extracellular side of the membrane; that stretch reads YGFSLSAVYTCKRDPCPHQVDCFLSRPTEKT. A helical transmembrane segment spans residues 208 to 228; the sequence is IFIIFMLVVSLVSLALNIIEL. Residues 229 to 382 lie on the Cytoplasmic side of the membrane; sequence FYAFFKGVKD…SRPRPDDLEI (154 aa). Lys237 is covalently cross-linked (Glycyl lysine isopeptide (Lys-Gly) (interchain with G-Cter in SUMO)). The interval 244 to 382 is interaction with NOV; the sequence is SDPYHATTGP…SRPRPDDLEI (139 aa). Phosphotyrosine is present on Tyr247. Phosphoserine occurs at positions 255, 257, and 262. An interaction with UBQLN4 region spans residues 264 to 382; the sequence is KYAYFNGCSS…SRPRPDDLEI (119 aa). Cys271 carries the post-translational modification S-nitrosocysteine. Thr275 bears the Phosphothreonine mark. Phosphoserine occurs at positions 306 and 314. Over residues 317 to 332 the composition is skewed to polar residues; that stretch reads QNRMGQAGSTISNSHA. The interval 317 to 382 is disordered; sequence QNRMGQAGST…SRPRPDDLEI (66 aa). Ser325 carries the phosphoserine; by CK1 modification. Residue Thr326 is modified to Phosphothreonine. Phosphoserine; by CK1 occurs at positions 328 and 330. The span at 342–351 shows a compositional bias: basic and acidic residues; sequence QNSKKLDAGH. Phosphoserine occurs at positions 344 and 365. The segment covering 362–374 has biased composition (low complexity); that stretch reads RPSSRASSRASSR. Ser368 carries the phosphoserine; by PKC/PRKCG and PKC/PRKCD modification. Phosphoserine is present on residues Ser369 and Ser373.

This sequence belongs to the connexin family. Alpha-type (group II) subfamily. In terms of assembly, a connexon is composed of a hexamer of connexins. Interacts with SGSM3. Interacts with RIC1/CIP150. Interacts with CNST and CSNK1D. Interacts (via C-terminus) with TJP1. Interacts (via C-terminus) with SRC (via SH3 domain). Interacts (not ubiquitinated) with UBQLN4 (via UBA domain). Interacts with NOV. Interacts with TMEM65. Interacts with ANK3/ANKG and PKP2. In terms of processing, phosphorylation at Ser-325, Ser-328 and Ser-330 by CK1 modulates gap junction assembly. Phosphorylated at Ser-368 by PRKCG; phosphorylation induces disassembly of gap junction plaques and inhibition of gap junction activity. Phosphorylation at Ser-368 by PRKCD triggers its internalization into small vesicles leading to proteasome-mediated degradation. Sumoylated with SUMO1, SUMO2 and SUMO3, which may regulate the level of functional Cx43 gap junctions at the plasma membrane. May be desumoylated by SENP1 or SENP2. Post-translationally, S-nitrosylation at Cys-271 is enriched at the muscle endothelial gap junction in arteries, it augments channel permeability and may regulate of smooth muscle cell to endothelial cell communication. In terms of processing, acetylated in the developing cortex; leading to delocalization from the cell membrane.

It is found in the cell membrane. It localises to the cell junction. The protein resides in the gap junction. Its subcellular location is the endoplasmic reticulum. In terms of biological role, gap junction protein that acts as a regulator of bladder capacity. A gap junction consists of a cluster of closely packed pairs of transmembrane channels, the connexons, through which materials of low MW diffuse from one cell to a neighboring cell. May play a critical role in the physiology of hearing by participating in the recycling of potassium to the cochlear endolymph. Negative regulator of bladder functional capacity: acts by enhancing intercellular electrical and chemical transmission, thus sensitizing bladder muscles to cholinergic neural stimuli and causing them to contract. May play a role in cell growth inhibition through the regulation of NOV expression and localization. Plays an essential role in gap junction communication in the ventricles. The polypeptide is Gap junction alpha-1 protein (GJA1) (Sus scrofa (Pig)).